The sequence spans 122 residues: Ribosome-binding factor A (122 aa).

This sequence belongs to the RbfA family. As to quaternary structure, monomer. Binds 30S ribosomal subunits, but not 50S ribosomal subunits or 70S ribosomes.

It is found in the cytoplasm. In terms of biological role, one of several proteins that assist in the late maturation steps of the functional core of the 30S ribosomal subunit. Associates with free 30S ribosomal subunits (but not with 30S subunits that are part of 70S ribosomes or polysomes). Required for efficient processing of 16S rRNA. May interact with the 5'-terminal helix region of 16S rRNA. This chain is Ribosome-binding factor A, found in Pelobacter propionicus (strain DSM 2379 / NBRC 103807 / OttBd1).